The chain runs to 714 residues: Hormonally up-regulated neu tumor-associated kinase (714 aa).

The segment covering 1 to 15 (MPAAAGDGLLGEPAA) has biased composition (low complexity). The disordered stretch occupies residues 1-26 (MPAAAGDGLLGEPAAPGGGGGAEDAA). The region spanning 62 to 320 (LIGSRKLGEG…IQQALANRWL (259 aa)) is the Protein kinase domain. Residues 68–76 (LGEGSFAKV) and K91 each bind ATP. D186 serves as the catalytic Proton acceptor. The span at 437–461 (KKPKEQEKRGDFLHRPFSKKLDKNL) shows a compositional bias: basic and acidic residues. 3 disordered regions span residues 437 to 471 (KKPK…SGSL), 518 to 552 (MEFI…HKED), and 590 to 615 (ARRN…HTPL). Residues 599–611 (LSPGLPSGSMSPL) are compositionally biased toward low complexity.

Belongs to the protein kinase superfamily. CAMK Ser/Thr protein kinase family. SNF1 subfamily.

The catalysed reaction is L-seryl-[protein] + ATP = O-phospho-L-seryl-[protein] + ADP + H(+). It carries out the reaction L-threonyl-[protein] + ATP = O-phospho-L-threonyl-[protein] + ADP + H(+). The chain is Hormonally up-regulated neu tumor-associated kinase (HUNK) from Homo sapiens (Human).